Consider the following 161-residue polypeptide: Afimbrial adhesin AFA-I (161 aa).

Positions 1-21 (MKKLAIIGATSVMMMTGTAQA) are cleaved as a signal peptide.

This sequence belongs to the Dr-adhesin family.

The protein localises to the fimbrium. Hemagglutinins of uropathogenic E.coli mediate adherence to the upper urinary tract. These adhesins bind to the Dr blood group antigen and also agglutinate human erythrocytes in the presence of D-mannose (mannose-resistant hemagglutination (MRHA)). The protein is Afimbrial adhesin AFA-I (afaE1) of Escherichia coli.